A 644-amino-acid polypeptide reads, in one-letter code: Sodium/hydrogen exchanger 9 (644 aa).

Topologically, residues 1–20 are lumenal; that stretch reads MAGQLRFTSGKDEDHFQHQG. A helical membrane pass occupies residues 21-41; it reads AVELLAFNFLLILTILTIWLF. The Cytoplasmic portion of the chain corresponds to 42-45; it reads KNHR. The chain crosses the membrane as a helical span at residues 46–66; sequence FRFLHETGGAMVYGLIMGLIL. At 67-126 the chain is on the lumenal side; the sequence is RYATAPTDIDSGTVYNCGNLFFSPSTLLVNITDQVYEYKYQREINQHNISPHQGNAILEK. A helical membrane pass occupies residues 127 to 147; it reads MTFDPEIFFNVLLPPIIFHAG. The Cytoplasmic segment spans residues 148–164; sequence YSLKKRHFFQNLGSILT. Residues 165 to 185 traverse the membrane as a helical segment; it reads YAFLGTAISCVVIGLIMYGFV. Topologically, residues 186 to 203 are lumenal; sequence KAMVHAGQLKSGDFHFTD. A helical membrane pass occupies residues 204-224; that stretch reads CLFFGSLMSATDPVTVLAIFH. Over 225–235 the chain is Cytoplasmic; it reads ELHVDPDLYTL. A helical transmembrane segment spans residues 236–256; the sequence is LFGESVLNDAVAIVLTYSISI. Over 257-277 the chain is Lumenal; the sequence is YSPKENPNAFDTAAFFQSVGN. Residues 278–298 form a helical membrane-spanning segment; sequence FLGIFAGSFAMGSAYAVVTAL. Residues 299-309 are Cytoplasmic-facing; sequence LTKFTKLREFP. Residues 310-327 form a helical membrane-spanning segment; the sequence is MLETGLFFLLSWSAFLSA. The Lumenal segment spans residues 328–333; it reads EAAGLT. The helical transmembrane segment at 334–350 threads the bilayer; it reads GIVAVLFCGVTQAHYTY. Topologically, residues 351–364 are cytoplasmic; that stretch reads NNLSSDSKLRTKQL. Residues 365-385 traverse the membrane as a helical segment; it reads FEFMNFLAENVIFCYMGLALF. A topological domain (lumenal) is located at residue T386. A helical transmembrane segment spans residues 387–407; the sequence is FQNHIFNALFILGAFLAIFVA. Residues 408-429 lie on the Cytoplasmic side of the membrane; the sequence is RACNIYPLSFLLNLGRKQKIPW. A helical transmembrane segment spans residues 430–450; that stretch reads NFQHMMMFSGLRGAIAFALAI. Over 451–465 the chain is Lumenal; the sequence is RNTESQPKQMMFTTT. Residues 466 to 486 form a helical membrane-spanning segment; the sequence is LLLVFFTVWVFGGGTTPMLTW. Residues 487–644 are Cytoplasmic-facing; sequence LQIRVGVDLD…EQTRGQPQMD (158 aa). The segment at 590 to 644 is disordered; it reads YQEQSPSPSSPTTKLALDQKSSGQTPGKENIYEGDLGLGGYDLKLEQTRGQPQMD.

It belongs to the monovalent cation:proton antiporter 1 (CPA1) transporter (TC 2.A.36) family. Homodimer; phosphatidylinositol-4,5-bisphosphate (PIP2) and phosphatidylinositol 3,4,5-trisphosphate (PIP3) could be involved in the dimer stabilization. Interacts (via the C-terminus) with RACK1. Interacts with CHP1. In terms of tissue distribution, expressed in the brain. Highly expressed in immune cells, specifically macrophages.

It is found in the late endosome membrane. It localises to the cell membrane. Its subcellular location is the early endosome membrane. The protein resides in the recycling endosome membrane. The protein localises to the cytoplasmic vesicle. It is found in the phagosome membrane. It catalyses the reaction Na(+)(in) + H(+)(out) = Na(+)(out) + H(+)(in). It carries out the reaction K(+)(in) + H(+)(out) = K(+)(out) + H(+)(in). Functionally, endosomal Na(+), K(+)/H(+) antiporter. Mediates the electroneutral exchange of endosomal luminal H(+) for a cytosolic Na(+) or K(+). By facilitating proton efflux, SLC9A9 counteracts the acidity generated by vacuolar (V)-ATPase, thereby limiting luminal acidification. Regulates organellar pH and consequently, endosome maturation and endocytic trafficking of plasma membrane receptors and neurotransporters. Promotes the recycling of transferrin receptors back to the cell surface to facilitate additional iron uptake in the brain. Regulates synaptic transmission by regulating the luminal pH of axonal endosomes. Regulates phagosome lumenal pH, thus affecting phagosome maturation, and consequently, microbicidal activity in macrophages. Can also be active at the cell surface of specialized cells, e.g., in the inner ear hair bundles uses the high K(+) of the endolymph to regulate intracelular pH. This is Sodium/hydrogen exchanger 9 (Slc9a9) from Mus musculus (Mouse).